Here is a 211-residue protein sequence, read N- to C-terminus: Ribonuclease MRP protein subunit rmp1 (211 aa).

A helical membrane pass occupies residues 73 to 93 (PALGLVLLGILARVWFVMGGI). Ser156 is subject to Phosphoserine. Residues 178-211 (SQGTKRKSKNSNSTVKKKKKRARKGRDEIDDIFG) form a disordered region. The span at 181 to 201 (TKRKSKNSNSTVKKKKKRARK) shows a compositional bias: basic residues.

In terms of assembly, component of RNase MRP complex which consists of an RNA moiety and at least 10 protein subunits.

The protein resides in the membrane. It is found in the nucleus. The protein localises to the nucleolus. In terms of biological role, functions as part of ribonuclease MRP (RNase MRP), which is involved in rRNA processing in mitochondria. This is Ribonuclease MRP protein subunit rmp1 from Schizosaccharomyces pombe (strain 972 / ATCC 24843) (Fission yeast).